A 384-amino-acid polypeptide reads, in one-letter code: Tryptophan--tRNA ligase (384 aa).

The short motif at 81 to 89 (PSGPMHIGH) is the 'HIGH' region element. The 'KMSKS' region motif lies at 252-256 (KMSAS).

Belongs to the class-I aminoacyl-tRNA synthetase family.

The protein resides in the cytoplasm. It carries out the reaction tRNA(Trp) + L-tryptophan + ATP = L-tryptophyl-tRNA(Trp) + AMP + diphosphate + H(+). This chain is Tryptophan--tRNA ligase, found in Thermococcus sibiricus (strain DSM 12597 / MM 739).